Consider the following 334-residue polypeptide: Procathepsin L (334 aa).

The N-terminal stretch at 1 to 17 (MNLLLLLAVLCLGTALA) is a signal peptide. A propeptide spans 18-113 (TPKFDQTFSA…RLFQEPLMLK (96 aa)) (activation peptide). Glutamate 122 is a binding site for Zn(2+). Disulfide bonds link cysteine 135-cysteine 178 and cysteine 169-cysteine 211. Cysteine 138 is a catalytic residue. Glutamate 163, aspartate 184, glutamate 199, and glutamate 205 together coordinate Zn(2+). An N-linked (GlcNAc...) (high mannose) asparagine glycan is attached at asparagine 221. 4 residues coordinate Zn(2+): aspartate 227, aspartate 250, histidine 253, and aspartate 275. An intrachain disulfide couples cysteine 269 to cysteine 322. The active site involves histidine 276. Positions 289-290 (DS) are excised as a propeptide. Asparagine 300 is a catalytic residue.

The protein belongs to the peptidase C1 family. Dimer of a heavy and a light chain linked by disulfide bonds. Interacts with Long isoform of CD74/Ii chain; the interaction stabilizes the conformation of mature CTSL. Post-translationally, during export along the endocytic pathway, pro-CTSL undergoes several proteolytic cleavages to generate the CTSL single-chain and two-chain mature forms, composed of a heavy chain linked to a light chain by disulfide bonds. Autocleavage; produces the single-chain CTSL after cleavage of the propeptide. The cleavage can be intermolecular. Expressed in thymus, kidney and liver. Expressed in thyroid epithelial cells. Expressed in cortical thymic epithelial cells. Expressed by antigen presenting cells (APCs) such as dendritic cells and macrophages.

It localises to the lysosome. Its subcellular location is the apical cell membrane. The protein localises to the secreted. The protein resides in the extracellular space. It is found in the cytoplasmic vesicle. It localises to the secretory vesicle. Its subcellular location is the chromaffin granule. The catalysed reaction is Specificity close to that of papain. As compared to cathepsin B, cathepsin L exhibits higher activity toward protein substrates, but has little activity on Z-Arg-Arg-NHMec, and no peptidyl-dipeptidase activity.. Its activity is regulated as follows. Long isoform of CD74/Ii chain stabilizes the conformation of mature CTSL by binding to its active site and serving as a chaperone to help maintain a pool of mature enzyme in endocytic compartments and extracellular space of APCs. IFNG enhances the conversion into the CTSL mature and active form. Inhibited by CST6. Inhibited by the glycopeptide antibiotic teicoplanin. Inhibited by amantadine. Functionally, thiol protease important for the overall degradation of proteins in lysosomes. Involved in the solubilization of cross-linked TG/thyroglobulin and in the subsequent release of thyroid hormone thyroxine (T4) by limited proteolysis of TG/thyroglobulin in the thyroid follicle lumen. In neuroendocrine chromaffin cells secretory vesicles, catalyzes the prohormone proenkephalin processing to the active enkephalin peptide neurotransmitter. In thymus, regulates CD4(+) T cell positive selection by generating the major histocompatibility complex class II (MHCII) bound peptide ligands presented by cortical thymic epithelial cells. Also mediates invariant chain processing in cortical thymic epithelial cells. Major elastin-degrading enzyme at neutral pH. Accumulates as a mature and active enzyme in the extracellular space of antigen presenting cells (APCs) to regulate degradation of the extracellular matrix in the course of inflammation. Secreted form generates endostatin from COL18A1. Critical for cardiac morphology and function. Plays an important role in hair follicle morphogenesis and cycling, as well as epidermal differentiation. Required for maximal stimulation of steroidogenesis by TIMP1. The chain is Procathepsin L from Mus musculus (Mouse).